Consider the following 96-residue polypeptide: Large ribosomal subunit protein bL27 (96 aa).

Positions 1–9 are excised as a propeptide; sequence MLRLDLQFF. The segment at 13-35 is disordered; sequence KGVGSTKNGRDSQSKRLGAKRAD.

It belongs to the bacterial ribosomal protein bL27 family. In terms of processing, the N-terminus is cleaved by ribosomal processing cysteine protease Prp.

This is Large ribosomal subunit protein bL27 from Bacillus cereus (strain B4264).